The primary structure comprises 959 residues: Protovillin (959 aa).

Residues Met-1–Ile-53 form a tail region. The segment at Gly-54–Thr-832 is core. Gelsolin-like repeat units lie at residues Ser-64–Thr-116, Ile-204–Gly-244, Ile-309–Thr-366, Arg-479–Gly-529, Ile-603–Ala-647, and Phe-713–Leu-754. 2 consecutive repeat copies span residues Thr-840 to Val-849 and Thr-851 to Val-860. The segment at Thr-840–Val-860 is 2 X 10 AA repeats of T-P-K-P-I-T-T-P-T-V. The 65-residue stretch at Thr-895–Phe-959 folds into the HP domain.

It belongs to the villin/gelsolin family.

Its subcellular location is the cytoplasm. The protein resides in the cytoskeleton. Functionally, caps actin filaments but displays neither severing nor cross-linking nor nucleating activities. Protovillin seems to be a villin precursor with only archaic capping activity. It lacks essential changes in the sequence to allow bundling of actin filaments and consequently the appearance of microvilli. The chain is Protovillin (vilB) from Dictyostelium discoideum (Social amoeba).